Consider the following 74-residue polypeptide: Large ribosomal subunit protein bL31 (74 aa).

Residues C16, C18, C38, and C41 each coordinate Zn(2+).

It belongs to the bacterial ribosomal protein bL31 family. Type A subfamily. In terms of assembly, part of the 50S ribosomal subunit. It depends on Zn(2+) as a cofactor.

Functionally, binds the 23S rRNA. In Streptomyces coelicolor (strain ATCC BAA-471 / A3(2) / M145), this protein is Large ribosomal subunit protein bL31 (rpmE).